Reading from the N-terminus, the 265-residue chain is MNIAIAGASGRMGRMLIEQVLNTEGVSLAGALDVPGSPALGQDAGLLLGRQTGVAISSDVEAVLAGADCLIDFTRPEGTLAHVAAAKKLGVKMVIGTTGFDEAGKAALAEAARSIGIVFAANFSVGVNATFKLLEVAARLLSTGYDIEVIEAHHRFKVDAPSGTALKMGEVIADALGRDLKTCAVYAREGHTGERNPNSIGFATVRGGDIVGDHTVMFAGIGERIEISHKSSSRQSYADGAVRAARFLADKPNGLFDMQDVLGLK.

Residues 7 to 12 (GASGRM), Asp-33, 96 to 98 (GTT), and 120 to 123 (AANF) each bind NAD(+). Residue His-153 is the Proton donor/acceptor of the active site. Residue His-154 coordinates (S)-2,3,4,5-tetrahydrodipicolinate. The active-site Proton donor is the Lys-157. 163 to 164 (GT) is a binding site for (S)-2,3,4,5-tetrahydrodipicolinate.

This sequence belongs to the DapB family.

It localises to the cytoplasm. It catalyses the reaction (S)-2,3,4,5-tetrahydrodipicolinate + NAD(+) + H2O = (2S,4S)-4-hydroxy-2,3,4,5-tetrahydrodipicolinate + NADH + H(+). It carries out the reaction (S)-2,3,4,5-tetrahydrodipicolinate + NADP(+) + H2O = (2S,4S)-4-hydroxy-2,3,4,5-tetrahydrodipicolinate + NADPH + H(+). The protein operates within amino-acid biosynthesis; L-lysine biosynthesis via DAP pathway; (S)-tetrahydrodipicolinate from L-aspartate: step 4/4. In terms of biological role, catalyzes the conversion of 4-hydroxy-tetrahydrodipicolinate (HTPA) to tetrahydrodipicolinate. The chain is 4-hydroxy-tetrahydrodipicolinate reductase from Cupriavidus necator (strain ATCC 17699 / DSM 428 / KCTC 22496 / NCIMB 10442 / H16 / Stanier 337) (Ralstonia eutropha).